Consider the following 980-residue polypeptide: MFMFRNCAVLLVIGSICCFIYGLFRLHVEVEPNACRMTYMFGEPMFAKVGVRDGDQYPNYALYYYYEGLRQPLDPLKRRMTGAPVIFVPGNAGSYKQVRSLASVALRKAMSNDAGIHLDYYTIDYDEELSALYGGYLHRQQSYLKLCIRTILSIYEGRTEQPSIVLIGHSMGGKLAQSVLVDPAIGQHINTIISISTPLDQPVLNLDTQLEEFYDQTDAVLSKLRTATVPTMTTNVCDSLHQRPPSVQRMASQDSSARLDNVLLISTGGGNRDLLVRPGLTSSRFNDLHAMTSAIPKVSLSCDHLSAVWCLQFMQAINRFLFSVAYVREDRSSIAFGTNKQRNLQTALSTFVKPRRRQQNTVRFGAAGNWHEERRLVINKYFTNGLKGTFFDLIGLQRQERYRKAAIEALNVDDEDWLFGCSAEDNNKTGQLYCEKATSLMHLVQWLPNEDREPRSIALLDLHNLRKTYVHWTHLLVRLPPSAKRIGYNLDIYDPKERVTDIKMPRWYTMAKLPLINETLQGTLHHRVRISEMVDPYQSIRVIVEPLQCINPEYRVTARICVPWAAGFERFQTLKSFDQKPQLYVNVPTLVPRHYNTTLNPVTLELYLDPTCRYRISYEYSYSSALSRLVLEFYGWLPAHLVCVLLIVLRKQVETFYDVGTFRSLRPYVGYLQYTSLYIVTACRLLKKLIISSRVFPEPEPLDYSINVSIVIHCAAIALSLLATLGTWLALTLYGNAFYRLALRITRLSQATSNVMISIMTHLPITYGILTIATAMGTCSGVGLLLAFVFYFLMLSNAYKDYLEDFLWQKAANLVRGKPSAVTEQEDATEEQNEEQNALKQNDEQKQQQQEEEEPEACVGLQNFSFHVTLLLMLFVQLLLNAPSSLAWLRSRRHGINLPDPSLYPSIVVLASLSLLLQLRAPQKCQGYWMLSIAFYILAGVVLLYCQAAIYRLTYVIAGAFALLSAHQSLWILWGRVSRV.

Residues 1 to 7 (MFMFRNC) lie on the Cytoplasmic side of the membrane. The chain crosses the membrane as a helical span at residues 8-28 (AVLLVIGSICCFIYGLFRLHV). At 29–628 (EVEPNACRMT…EYSYSSALSR (600 aa)) the chain is on the lumenal side. Ser170 is a catalytic residue. N-linked (GlcNAc...) asparagine glycans are attached at residues Asn427, Asn517, and Asn596. The chain crosses the membrane as a helical span at residues 629 to 649 (LVLEFYGWLPAHLVCVLLIVL). Topologically, residues 650 to 709 (RKQVETFYDVGTFRSLRPYVGYLQYTSLYIVTACRLLKKLIISSRVFPEPEPLDYSINVS) are cytoplasmic. Residues 710-730 (IVIHCAAIALSLLATLGTWLA) traverse the membrane as a helical segment. Over 731-774 (LTLYGNAFYRLALRITRLSQATSNVMISIMTHLPITYGILTIAT) the chain is Lumenal. A helical transmembrane segment spans residues 775 to 795 (AMGTCSGVGLLLAFVFYFLML). Residues 796–867 (SNAYKDYLED…CVGLQNFSFH (72 aa)) are Cytoplasmic-facing. The disordered stretch occupies residues 821-853 (AVTEQEDATEEQNEEQNALKQNDEQKQQQQEEE). A compositionally biased stretch (acidic residues) spans 824–834 (EQEDATEEQNE). A helical transmembrane segment spans residues 868–888 (VTLLLMLFVQLLLNAPSSLAW). Topologically, residues 889 to 895 (LRSRRHG) are lumenal. Residues 896-916 (INLPDPSLYPSIVVLASLSLL) form a helical membrane-spanning segment. The Cytoplasmic portion of the chain corresponds to 917–929 (LQLRAPQKCQGYW). A helical membrane pass occupies residues 930 to 950 (MLSIAFYILAGVVLLYCQAAI). Residues 951–954 (YRLT) are Lumenal-facing. Residues 955–975 (YVIAGAFALLSAHQSLWILWG) form a helical membrane-spanning segment. Topologically, residues 976–980 (RVSRV) are cytoplasmic.

It belongs to the GPI inositol-deacylase family.

The protein localises to the endoplasmic reticulum membrane. Functionally, involved in inositol deacylation of GPI-anchored proteins. The protein is GPI inositol-deacylase of Drosophila melanogaster (Fruit fly).